The primary structure comprises 720 residues: Polyribonucleotide nucleotidyltransferase (720 aa).

Aspartate 484 and aspartate 490 together coordinate Mg(2+). In terms of domain architecture, KH spans 551 to 610 (PRMYKINIDPSKIGSVIGSGGKTIRSIIEQTNTTVDIENDGTVVIGAIDEASAKKAIKII). Positions 620–688 (GSIYTGKVTR…NQGRVNLSHR (69 aa)) constitute an S1 motif domain. The interval 697–720 (PISRNRDSQPRRPGPFRPSDRSNS) is disordered.

Belongs to the polyribonucleotide nucleotidyltransferase family. Mg(2+) serves as cofactor.

The protein resides in the cytoplasm. The catalysed reaction is RNA(n+1) + phosphate = RNA(n) + a ribonucleoside 5'-diphosphate. Functionally, involved in mRNA degradation. Catalyzes the phosphorolysis of single-stranded polyribonucleotides processively in the 3'- to 5'-direction. This Dehalococcoides mccartyi (strain ATCC BAA-2100 / JCM 16839 / KCTC 5957 / BAV1) protein is Polyribonucleotide nucleotidyltransferase.